The chain runs to 416 residues: Esterase FrsA (416 aa).

The disordered stretch occupies residues Glu19 to Thr39.

Belongs to the FrsA family.

The catalysed reaction is a carboxylic ester + H2O = an alcohol + a carboxylate + H(+). Functionally, catalyzes the hydrolysis of esters. The protein is Esterase FrsA of Pectobacterium atrosepticum (strain SCRI 1043 / ATCC BAA-672) (Erwinia carotovora subsp. atroseptica).